A 992-amino-acid polypeptide reads, in one-letter code: Vacuolar membrane protease (992 aa).

At 1–24 (MSPAMANPRVRKFNPIAFTPLPVT) the chain is on the cytoplasmic side. Residues 25 to 45 (FITTIVYLAVLILVLVTYLVV) form a helical membrane-spanning segment. The Vacuolar segment spans residues 46–390 (PPAPTLEMSP…SAFAVFRLHT (345 aa)). Residues Asn-59, Asn-115, and Asn-118 are each glycosylated (N-linked (GlcNAc...) asparagine). 2 residues coordinate Zn(2+): His-174 and Asp-186. Glu-220 acts as the Proton acceptor in catalysis. Residue Glu-221 coordinates Zn(2+). The N-linked (GlcNAc...) asparagine glycan is linked to Asn-237. Zn(2+) contacts are provided by Glu-246 and His-319. A helical transmembrane segment spans residues 391–411 (LFALSVTLLVIGPLVLFITSI). The Cytoplasmic portion of the chain corresponds to 412–446 (ALSKTDRMYLFSMSKSLGGASETVSLRGLRGLFRT). Residues 447–467 (PIILTVTTVISIGLAYLLEKI) form a helical membrane-spanning segment. Over 468 to 474 (NPYIVHS) the chain is Vacuolar. Residues 475–495 (SQFAVWSMMLSVWIFVAWFLA) form a helical membrane-spanning segment. Residues 496–508 (RVADFFRPSALHR) are Cytoplasmic-facing. A helical membrane pass occupies residues 509 to 529 (AYSYTWIFIVTWIMLVISTVY). The Vacuolar segment spans residues 530–533 (ANQK). The helical transmembrane segment at 534 to 554 (GIAAGYFTFFYFAAVFLATWV) threads the bilayer. Over 555–671 (SYLELFSLPR…WSWTLPRWTW (117 aa)) the chain is Cytoplasmic. The segment at 579 to 620 (RSSSLSSRLLTPSADELPSDIGPNGAENVGDPDETDPTESTS) is disordered. Residues 672–692 (ILQLLLLAPIVIILVGQVGLL) traverse the membrane as a helical segment. Topologically, residues 693–708 (LTTAMSQIGSDGVSTF) are vacuolar. Residues 709-729 (IVYLACALFSTLLFAPLLPFI) form a helical membrane-spanning segment. Residues 730-736 (HRFTYHV) are Cytoplasmic-facing. A helical transmembrane segment spans residues 737–757 (PIFLLLIFIGTLIYNLVAFPF). Over 758–992 (SPANRLKIFF…VEASHDFIIQ (235 aa)) the chain is Vacuolar. 3 N-linked (GlcNAc...) asparagine glycosylation sites follow: Asn-805, Asn-846, and Asn-954.

Belongs to the peptidase M28 family. The cofactor is Zn(2+).

The protein resides in the vacuole membrane. In terms of biological role, may be involved in vacuolar sorting and osmoregulation. The sequence is that of Vacuolar membrane protease from Paracoccidioides brasiliensis (strain Pb18).